A 380-amino-acid chain; its full sequence is Protein Wnt-5a (380 aa).

An N-terminal signal peptide occupies residues 1–35 (MKKSIGILSPGVALGTAGSAMSSKFFVMALAVFFS). Positions 36-61 (FAQVVIEANSWWSLGMNNPVQMSEVY) are excised as a propeptide. Residues Cys-104 and Cys-115 are joined by a disulfide bond. Residues Asn-114 and Asn-120 are each glycosylated (N-linked (GlcNAc...) asparagine). 10 disulfides stabilise this stretch: Cys-154/Cys-162, Cys-164/Cys-182, Cys-238/Cys-252, Cys-240/Cys-247, Cys-309/Cys-340, Cys-325/Cys-335, Cys-339/Cys-379, Cys-355/Cys-370, Cys-357/Cys-367, and Cys-362/Cys-363. Residue Ser-244 is the site of O-palmitoleoyl serine; by PORCN attachment. N-linked (GlcNAc...) asparagine glycans are attached at residues Asn-312 and Asn-326.

The protein belongs to the Wnt family. Forms a soluble 1:1 complex with AFM; this prevents oligomerization and is required for prolonged biological activity. The complex with AFM may represent the physiological form in body fluids. Homooligomer; disulfide-linked, leading to inactivation (in vitro). Interacts with PORCN. Interacts with WLS. Interacts with glypican GCP3. Interacts with PKD1 (via extracellular domain). Interacts with TMEM67. Glycosylation is necessary for secretion but not for activity. Post-translationally, palmitoleoylation is required for efficient binding to frizzled receptors. Depalmitoleoylation leads to Wnt signaling pathway inhibition. In terms of processing, proteolytic processing by TIKI1 and TIKI2 promotes oxidation and formation of large disulfide-bond oligomers, leading to inactivation of WNT5A.

It is found in the secreted. It localises to the extracellular space. Its subcellular location is the extracellular matrix. Its function is as follows. Ligand for members of the frizzled family of seven transmembrane receptors. Can activate or inhibit canonical Wnt signaling, depending on receptor context. In the presence of FZD4, activates beta-catenin signaling. In the presence of ROR2, inhibits the canonical Wnt pathway by promoting beta-catenin degradation through a GSK3-independent pathway which involves down-regulation of beta-catenin-induced reporter gene expression. Suppression of the canonical pathway allows chondrogenesis to occur. Inhibits tumor formation. Stimulates cell migration. Decreases proliferation, migration, invasiveness and clonogenicity of carcinoma cells and may act as a tumor suppressor. Mediates motility of melanoma cells. Required during embryogenesis for extension of the primary anterior-posterior axis and for outgrowth of limbs and the genital tubercle. Inhibits type II collagen expression in chondrocytes. The protein is Protein Wnt-5a of Oryctolagus cuniculus (Rabbit).